The primary structure comprises 392 residues: L-rhamnonate dehydratase (392 aa).

Substrate contacts are provided by H22 and R48. Positions 214, 240, and 268 each coordinate Mg(2+). The Proton acceptor role is filled by H318. Residue E338 coordinates substrate.

This sequence belongs to the mandelate racemase/muconate lactonizing enzyme family. RhamD subfamily. Homooctamer; tetramer of dimers. The cofactor is Mg(2+).

The enzyme catalyses L-rhamnonate = 2-dehydro-3-deoxy-L-rhamnonate + H2O. Its function is as follows. Catalyzes the dehydration of L-rhamnonate to 2-keto-3-deoxy-L-rhamnonate (KDR). This Paraburkholderia phymatum (strain DSM 17167 / CIP 108236 / LMG 21445 / STM815) (Burkholderia phymatum) protein is L-rhamnonate dehydratase.